The sequence spans 121 residues: Large ribosomal subunit protein bL12 (121 aa).

It belongs to the bacterial ribosomal protein bL12 family. In terms of assembly, homodimer. Part of the ribosomal stalk of the 50S ribosomal subunit. Forms a multimeric L10(L12)X complex, where L10 forms an elongated spine to which 2 to 4 L12 dimers bind in a sequential fashion. Binds GTP-bound translation factors.

Its function is as follows. Forms part of the ribosomal stalk which helps the ribosome interact with GTP-bound translation factors. Is thus essential for accurate translation. This is Large ribosomal subunit protein bL12 from Shewanella baltica (strain OS223).